Here is a 136-residue protein sequence, read N- to C-terminus: NADPH-dependent 7-cyano-7-deazaguanine reductase (136 aa).

The active-site Thioimide intermediate is cysteine 53. Catalysis depends on aspartate 60, which acts as the Proton donor. Substrate-binding positions include 75–77 (VEL) and 94–95 (HE).

The protein belongs to the GTP cyclohydrolase I family. QueF type 1 subfamily.

The protein localises to the cytoplasm. It carries out the reaction 7-aminomethyl-7-carbaguanine + 2 NADP(+) = 7-cyano-7-deazaguanine + 2 NADPH + 3 H(+). The protein operates within tRNA modification; tRNA-queuosine biosynthesis. Its function is as follows. Catalyzes the NADPH-dependent reduction of 7-cyano-7-deazaguanine (preQ0) to 7-aminomethyl-7-deazaguanine (preQ1). The protein is NADPH-dependent 7-cyano-7-deazaguanine reductase of Trichormus variabilis (strain ATCC 29413 / PCC 7937) (Anabaena variabilis).